The sequence spans 128 residues: Phosphoribosyl-AMP cyclohydrolase (128 aa).

A Mg(2+)-binding site is contributed by Asp-77. Cys-78 contributes to the Zn(2+) binding site. The Mg(2+) site is built by Asp-79 and Asp-81. 2 residues coordinate Zn(2+): Cys-95 and Cys-102.

It belongs to the PRA-CH family. In terms of assembly, homodimer. The cofactor is Mg(2+). It depends on Zn(2+) as a cofactor.

It localises to the cytoplasm. The enzyme catalyses 1-(5-phospho-beta-D-ribosyl)-5'-AMP + H2O = 1-(5-phospho-beta-D-ribosyl)-5-[(5-phospho-beta-D-ribosylamino)methylideneamino]imidazole-4-carboxamide. Its pathway is amino-acid biosynthesis; L-histidine biosynthesis; L-histidine from 5-phospho-alpha-D-ribose 1-diphosphate: step 3/9. Its function is as follows. Catalyzes the hydrolysis of the adenine ring of phosphoribosyl-AMP. This is Phosphoribosyl-AMP cyclohydrolase from Methylococcus capsulatus (strain ATCC 33009 / NCIMB 11132 / Bath).